We begin with the raw amino-acid sequence, 491 residues long: Aspartyl/glutamyl-tRNA(Asn/Gln) amidotransferase subunit B (491 aa).

This sequence belongs to the GatB/GatE family. GatB subfamily. As to quaternary structure, heterotrimer of A, B and C subunits.

The catalysed reaction is L-glutamyl-tRNA(Gln) + L-glutamine + ATP + H2O = L-glutaminyl-tRNA(Gln) + L-glutamate + ADP + phosphate + H(+). It catalyses the reaction L-aspartyl-tRNA(Asn) + L-glutamine + ATP + H2O = L-asparaginyl-tRNA(Asn) + L-glutamate + ADP + phosphate + 2 H(+). Functionally, allows the formation of correctly charged Asn-tRNA(Asn) or Gln-tRNA(Gln) through the transamidation of misacylated Asp-tRNA(Asn) or Glu-tRNA(Gln) in organisms which lack either or both of asparaginyl-tRNA or glutaminyl-tRNA synthetases. The reaction takes place in the presence of glutamine and ATP through an activated phospho-Asp-tRNA(Asn) or phospho-Glu-tRNA(Gln). This chain is Aspartyl/glutamyl-tRNA(Asn/Gln) amidotransferase subunit B, found in Paraburkholderia phytofirmans (strain DSM 17436 / LMG 22146 / PsJN) (Burkholderia phytofirmans).